A 172-amino-acid chain; its full sequence is Protein nemuri (172 aa).

An N-terminal signal peptide occupies residues 1–25; sequence MSAKYTLIFALAALCCLVFSTEAAA. The interval 27-172 is disordered; it reads RSRVLSSRRG…KRRSGKGNKA (146 aa). Composition is skewed to basic and acidic residues over residues 35 to 50, 58 to 90, and 97 to 108; these read RGSE…KEDS, DLER…DKET, and TIVKPNKDDARA. A coiled-coil region spans residues 45–74; it reads DNKEDSELAAQEQDLERQEQEEQNDRLEGR. Residues 109-172 are compositionally biased toward basic residues; the sequence is RRIVRAGRRR…KRRSGKGNKA (64 aa).

As to expression, detected in the brain where it accumulates in the dorsal fan-shaped body following sleep deprivation (at protein level). Expressed in the adult body.

The protein resides in the secreted. Antimicrobial protein which is essential for the homeostatic regulation of sleep. Promotes sleep following sleep deprivation or bacterial infection and increases survival following bacterial infection. Likely to promote survival to bacterial infection in two ways; by contributing to the innate immune response and by promoting sleep during sickness to aid recovery. The protein is Protein nemuri of Drosophila melanogaster (Fruit fly).